The chain runs to 547 residues: Cilia- and flagella- associated protein 210 (547 aa).

Coiled-coil stretches lie at residues 50–131, 183–251, and 342–405; these read ERIR…RKKA, VKLN…MKKN, and IARD…KADK. The tract at residues 214–237 is disordered; that stretch reads KQIEEHKEEEEARKKSEEKDAEEM.

As to quaternary structure, microtubule inner protein component of sperm flagellar doublet microtubules.

The protein localises to the cytoplasm. Its subcellular location is the cytoskeleton. The protein resides in the cilium axoneme. It localises to the flagellum axoneme. In terms of biological role, microtubule inner protein (MIP) part of the dynein-decorated doublet microtubules (DMTs) in cilia axoneme, which is required for motile cilia beating. This chain is Cilia- and flagella- associated protein 210 (Cfap210), found in Mus musculus (Mouse).